The primary structure comprises 1071 residues: Myosin IF heavy chain (1071 aa).

A Myosin motor domain is found at 40–736; sequence VGLTDMCFLE…TLFHFEELRQ (697 aa). 134–141 is an ATP binding site; that stretch reads GESGSGKT. Residues 610–632 form an actin-binding region; it reads INDLIGKLNTCQPHYIRCIKSNE. The region spanning 739–768 is the IQ domain; that stretch reads LPSIVITIQRVWRGYKVRKWYKQELQRLRE. The TH1 domain occupies 870–1069; the sequence is SRKKEWDCRR…KGNTAIVYYN (200 aa).

It belongs to the TRAFAC class myosin-kinesin ATPase superfamily. Myosin family. As to quaternary structure, myosin I heavy chain is single-headed. Dimer of a heavy and a light chain. Inability to self-assemble into filaments.

Myosin is a protein that binds to actin and has ATPase activity that is activated by actin. The sequence is that of Myosin IF heavy chain (myoF) from Dictyostelium discoideum (Social amoeba).